Reading from the N-terminus, the 308-residue chain is Membrane protein insertase YidC 1 (308 aa).

The first 22 residues, 1-22 (MKSIKRFALSAMGAAMLLVLTG), serve as a signal peptide directing secretion. C23 carries the N-palmitoyl cysteine lipid modification. A lipid anchor (S-diacylglycerol cysteine) is attached at C23. The next 5 membrane-spanning stretches (helical) occupy residues 60–80 (FGVA…PLGI), 135–155 (FGGV…AIYF), 168–188 (YLGI…GVLY), 211–225 (MIYM…FSLF), and 230–252 (VTLY…NYIV). Positions 263 to 308 (ELAKNPSKASAFSTPSGRKDVTPEQPTAITSKKKHKNRNAGKQRSR) are disordered. Residues 269–278 (SKASAFSTPS) are compositionally biased toward polar residues. Residues 293–308 (SKKKHKNRNAGKQRSR) show a composition bias toward basic residues.

Belongs to the OXA1/ALB3/YidC family. Type 2 subfamily.

Its subcellular location is the cell membrane. Its function is as follows. Required for the insertion and/or proper folding and/or complex formation of integral membrane proteins into the membrane. Involved in integration of membrane proteins that insert both dependently and independently of the Sec translocase complex, as well as at least some lipoproteins. This is Membrane protein insertase YidC 1 from Streptococcus pneumoniae (strain ATCC BAA-255 / R6).